The following is an 862-amino-acid chain: Phosphatidic acid phosphohydrolase 1 (862 aa).

Residues 19-104 (NPATLSGAID…VPDELLVSPV (86 aa)) are N-LIP. Disordered regions lie at residues 104-183 (VMSA…SVEE) and 300-341 (GSTL…AGSG). A compositionally biased stretch (polar residues) spans 105 to 117 (MSATSSPPQSPET). Residues Ser110 and Ser114 each carry the phosphoserine modification. Over residues 132–143 (NENKKKEKKVLE) the composition is skewed to basic and acidic residues. 2 stretches are compositionally biased toward low complexity: residues 161–179 (SETT…TPPD) and 300–313 (GSTL…PSGS). Position 168 is a phosphoserine (Ser168). The DXDXT motif signature appears at 398 to 402 (DIDGT). The residue at position 496 (Lys496) is an N6-acetyllysine. Residue Ser511 is modified to Phosphoserine. Ser602 carries the phosphoserine; by CDC28 modification. Residues 648-732 (SDISNDDSDN…TPNKSTMSKG (85 aa)) form a disordered region. Positions 651 to 663 (SNDDSDNIDEDTD) are enriched in acidic residues. Composition is skewed to polar residues over residues 664-679 (VSQQ…NSVK) and 687-699 (PQRN…NNNE). Low complexity predominate over residues 710 to 730 (ASDLVSSHSSSGSTPNKSTMS). Thr723 carries the post-translational modification Phosphothreonine; by CDC28. Ser744 carries the post-translational modification Phosphoserine; by CDC28. Residues Ser748, Ser773, and Ser774 each carry the phosphoserine modification. The segment at 757–780 (MDDEDSNYNRTKSRRASSAAATSI) is disordered. Lys801 carries the N6-acetyllysine modification. The interval 807–862 (DVHSLGNSDTESRREQSVNETGRNQLPHNSMDDKDLDSRVSDEFDDDEFDEDEFED) is disordered. Phosphoserine occurs at positions 810 and 814. Position 816 is a phosphothreonine (Thr816). The segment covering 824–834 (VNETGRNQLPH) has biased composition (polar residues). The segment covering 836-848 (SMDDKDLDSRVSD) has biased composition (basic and acidic residues). 2 positions are modified to phosphoserine: Ser844 and Ser847. Positions 849 to 862 (EFDDDEFDEDEFED) are enriched in acidic residues.

This sequence belongs to the lipin family. It depends on Mg(2+) as a cofactor. Acetylation at Lys-496 and Lys-801 by ESA1 promotes synthesis of diacylglycerol. In terms of processing, phosphorylated by CDC28 at the onset of mitosis, and dephosphorylated by the NEM1-SPO7 complex. Phosphorylation regulates recruitment on promoters of lipid biosynthetic enzymes.

It localises to the cytoplasm. The protein resides in the nucleus membrane. Its subcellular location is the endoplasmic reticulum membrane. It catalyses the reaction a 1,2-diacyl-sn-glycero-3-phosphate + H2O = a 1,2-diacyl-sn-glycerol + phosphate. Phenylglyoxal and propranolol inhibit activity in dose-dependent manners with IC(50) values of 1.3 mM and 0.2 mM, respectively. Sertraline inhibits activity in a dose-dependent manner with an IC(50) value of 85 uM; the inhibitory effects of sertraline and propranolol are additive. Functionally, mg(2+)-dependent phosphatidate (PA) phosphatase which catalyzes the dephosphorylation of PA to yield diacylglycerol. Required for de novo lipid synthesis and formation of lipid droplets. Controls transcription of phospholipid biosynthetic genes and nuclear structure by regulating the amount of membrane present at the nuclear envelope. Involved in plasmid maintenance, in respiration and in cell proliferation. The sequence is that of Phosphatidic acid phosphohydrolase 1 (PAH1) from Saccharomyces cerevisiae (strain ATCC 204508 / S288c) (Baker's yeast).